Consider the following 909-residue polypeptide: Cutinase transcription factor 1 alpha (909 aa).

Residues 1-51 (MSSGDAPPQAQPQPHQQEQPNQRQSSTPAPSAAPVPPAPSTSTSNSAGGVS) are disordered. Positions 12–30 (PQPHQQEQPNQRQSSTPAP) are enriched in low complexity. The segment at residues 61–90 (CETCHARKVRCDAASLGVPCTNCVAFQIEC) is a DNA-binding region (zn(2)-C6 fungal-type). Disordered stretches follow at residues 95–159 (PKRK…EAQA), 651–757 (AEGK…SFSV), and 841–878 (LPQG…QGQA). The segment covering 110–119 (KDSDSDRGDG) has biased composition (basic and acidic residues). Positions 142–156 (VFHSHNGTPPTTLTE) are enriched in polar residues. Basic and acidic residues predominate over residues 669 to 683 (QHSRQQEAPKRKYDE). 3 stretches are compositionally biased toward polar residues: residues 704–717 (PQTP…TSSM), 737–755 (GGTN…NPSF), and 865–878 (SPDS…QGQA).

It localises to the nucleus. The chain is Cutinase transcription factor 1 alpha (CTF1-ALPHA) from Fusarium vanettenii (Neocosmospora pisi).